The primary structure comprises 145 residues: Aspartate 1-decarboxylase (145 aa).

S26 acts as the Schiff-base intermediate with substrate; via pyruvic acid in catalysis. S26 bears the Pyruvic acid (Ser) mark. Position 58 (T58) interacts with substrate. The active-site Proton donor is Y59. Residue 74–76 (GGA) coordinates substrate.

The protein belongs to the PanD family. As to quaternary structure, heterooctamer of four alpha and four beta subunits. It depends on pyruvate as a cofactor. Post-translationally, is synthesized initially as an inactive proenzyme, which is activated by self-cleavage at a specific serine bond to produce a beta-subunit with a hydroxyl group at its C-terminus and an alpha-subunit with a pyruvoyl group at its N-terminus.

The protein localises to the cytoplasm. It carries out the reaction L-aspartate + H(+) = beta-alanine + CO2. The protein operates within cofactor biosynthesis; (R)-pantothenate biosynthesis; beta-alanine from L-aspartate: step 1/1. In terms of biological role, catalyzes the pyruvoyl-dependent decarboxylation of aspartate to produce beta-alanine. This is Aspartate 1-decarboxylase from Synechocystis sp. (strain ATCC 27184 / PCC 6803 / Kazusa).